We begin with the raw amino-acid sequence, 954 residues long: Endogenous retrovirus group K member 25 Pol protein (954 aa).

In terms of domain architecture, Reverse transcriptase spans 57 to 245; it reads LEKGHIEPSF…TPFHYLGMQI (189 aa). Positions 161-164 match the LPQG motif; the sequence is LPQG. A YXDD motif is present at residues 195–198; it reads YIDD. Residues 460–588 form the RNase H type-1 domain; that stretch reads LENALTVFTD…ADLLVSSALI (129 aa). The Mg(2+) site is built by D469, E497, D515, and D580. The Integrase-type zinc finger occupies 585-626; sequence SALIKAQELHALTHVNAAGLKNKFDVTWKLAKDIVQHCTQCQ. Zn(2+) contacts are provided by H594, H598, C622, and C625. The Integrase catalytic domain maps to 640–801; it reads RGLCPNALWQ…TSAEQHLTGK (162 aa). Residues 809-857 constitute a DNA-binding region (integrase-type); sequence KLIWWKDNKNKTWEIGKVITWGRGFACVSPGENQLPVWIPTRHLKFYNE. Positions 862–888 are disordered; it reads AKKSTSAETETPQSSTVDSQDEQNGDV. The segment covering 867 to 879 has biased composition (polar residues); sequence SAETETPQSSTVD.

Belongs to the beta type-B retroviral polymerase family. HERV class-II K(HML-2) pol subfamily.

It carries out the reaction DNA(n) + a 2'-deoxyribonucleoside 5'-triphosphate = DNA(n+1) + diphosphate. The enzyme catalyses Endonucleolytic cleavage to 5'-phosphomonoester.. Its function is as follows. Early post-infection, the reverse transcriptase converts the viral RNA genome into double-stranded viral DNA. The RNase H domain of the reverse transcriptase performs two functions. It degrades the RNA template and specifically removes the RNA primer from the RNA/DNA hybrid. Following nuclear import, the integrase catalyzes the insertion of the linear, double-stranded viral DNA into the host cell chromosome. Endogenous Pol proteins may have kept, lost or modified their original function during evolution. This Homo sapiens (Human) protein is Endogenous retrovirus group K member 25 Pol protein (ERVK-25).